A 355-amino-acid polypeptide reads, in one-letter code: Methionine import ATP-binding protein MetN 1 (355 aa).

Residues 6 to 245 form the ABC transporter domain; the sequence is IDLKDIAVTF…PKAPLTVDFV (240 aa). 42 to 49 is an ATP binding site; that stretch reads GYSGAGKS.

This sequence belongs to the ABC transporter superfamily. Methionine importer (TC 3.A.1.24) family. The complex is composed of two ATP-binding proteins (MetN), two transmembrane proteins (MetI) and a solute-binding protein (MetQ).

The protein localises to the cell membrane. The catalysed reaction is L-methionine(out) + ATP + H2O = L-methionine(in) + ADP + phosphate + H(+). It carries out the reaction D-methionine(out) + ATP + H2O = D-methionine(in) + ADP + phosphate + H(+). Part of the ABC transporter complex MetNIQ involved in methionine import. Responsible for energy coupling to the transport system. This Lactiplantibacillus plantarum (strain ATCC BAA-793 / NCIMB 8826 / WCFS1) (Lactobacillus plantarum) protein is Methionine import ATP-binding protein MetN 1.